A 420-amino-acid polypeptide reads, in one-letter code: Serine hydroxymethyltransferase (420 aa).

(6S)-5,6,7,8-tetrahydrofolate is bound by residues leucine 121 and 125–127; that span reads GHL. Lysine 230 is modified (N6-(pyridoxal phosphate)lysine). (6S)-5,6,7,8-tetrahydrofolate-binding positions include glutamate 246 and 354–356; that span reads SPF.

Belongs to the SHMT family. As to quaternary structure, homodimer. Pyridoxal 5'-phosphate is required as a cofactor.

It localises to the cytoplasm. The catalysed reaction is (6R)-5,10-methylene-5,6,7,8-tetrahydrofolate + glycine + H2O = (6S)-5,6,7,8-tetrahydrofolate + L-serine. It functions in the pathway one-carbon metabolism; tetrahydrofolate interconversion. Its pathway is amino-acid biosynthesis; glycine biosynthesis; glycine from L-serine: step 1/1. Functionally, catalyzes the reversible interconversion of serine and glycine with tetrahydrofolate (THF) serving as the one-carbon carrier. This reaction serves as the major source of one-carbon groups required for the biosynthesis of purines, thymidylate, methionine, and other important biomolecules. Also exhibits THF-independent aldolase activity toward beta-hydroxyamino acids, producing glycine and aldehydes, via a retro-aldol mechanism. In Rickettsia massiliae (strain Mtu5), this protein is Serine hydroxymethyltransferase.